Reading from the N-terminus, the 205-residue chain is GTP cyclohydrolase-2 (205 aa).

49 to 53 lines the GTP pocket; that stretch reads RIHSE. Zn(2+) contacts are provided by Cys54, Cys65, and Cys67. Residues Gln70, 92 to 94, and Thr114 each bind GTP; that span reads EGR. Asp126 functions as the Proton acceptor in the catalytic mechanism. Residue Arg128 is the Nucleophile of the active site. Positions 149 and 154 each coordinate GTP.

The protein belongs to the GTP cyclohydrolase II family. The cofactor is Zn(2+).

It carries out the reaction GTP + 4 H2O = 2,5-diamino-6-hydroxy-4-(5-phosphoribosylamino)-pyrimidine + formate + 2 phosphate + 3 H(+). The protein operates within cofactor biosynthesis; riboflavin biosynthesis; 5-amino-6-(D-ribitylamino)uracil from GTP: step 1/4. In terms of biological role, catalyzes the conversion of GTP to 2,5-diamino-6-ribosylamino-4(3H)-pyrimidinone 5'-phosphate (DARP), formate and pyrophosphate. The polypeptide is GTP cyclohydrolase-2 (Shewanella sediminis (strain HAW-EB3)).